The sequence spans 365 residues: MSKLKEKREKAVVGIERASKEEAIELARVQIEKAFGKGSLIKMGESPVGQGIKSMSSGSIVLDEALGIGGYPRGRIIEIFGPESSGKTTLTLQAIAEVQKEGGIAAFIDAEHALDPVYAKALGVNVAELWLSQPDTGEQALEIAEHLIRSGGVDLIVVDSVAALTPKLEIDGEMGDSQIGLQARLMSKALRKITGILSKSNTCIMFINQIRMRIGVMFGNPETTTGGNALKFYSSLRLEVRKIEQVTRSGSSDDVIGNKIRVKIVKNKVAPPFRKVELIIYFGKGISREAGILDAAIKHNLIQKTGSWYSLGDNKLGQGRESVIEYLSKEVELANNLDKRLRKIIFNNFDQENDNFIEFKEDESE.

Position 81–88 (81–88) interacts with ATP; the sequence is GPESSGKT.

It belongs to the RecA family.

The protein resides in the cytoplasm. In terms of biological role, can catalyze the hydrolysis of ATP in the presence of single-stranded DNA, the ATP-dependent uptake of single-stranded DNA by duplex DNA, and the ATP-dependent hybridization of homologous single-stranded DNAs. It interacts with LexA causing its activation and leading to its autocatalytic cleavage. This chain is Protein RecA, found in Borreliella burgdorferi (strain ATCC 35210 / DSM 4680 / CIP 102532 / B31) (Borrelia burgdorferi).